The sequence spans 227 residues: Guanylate kinase (227 aa).

A Guanylate kinase-like domain is found at 21–199 (GNLFMVVAPS…ALAELECIVA (179 aa)). ATP is bound at residue 28–35 (APSGAGKS).

The protein belongs to the guanylate kinase family.

It is found in the cytoplasm. It catalyses the reaction GMP + ATP = GDP + ADP. Its function is as follows. Essential for recycling GMP and indirectly, cGMP. This Burkholderia mallei (strain ATCC 23344) protein is Guanylate kinase.